Consider the following 232-residue polypeptide: 2,3,4,5-tetrahydropyridine-2,6-dicarboxylate N-acetyltransferase (232 aa).

Belongs to the transferase hexapeptide repeat family. DapH subfamily.

It carries out the reaction (S)-2,3,4,5-tetrahydrodipicolinate + acetyl-CoA + H2O = L-2-acetamido-6-oxoheptanedioate + CoA. It functions in the pathway amino-acid biosynthesis; L-lysine biosynthesis via DAP pathway; LL-2,6-diaminopimelate from (S)-tetrahydrodipicolinate (acetylase route): step 1/3. Catalyzes the transfer of an acetyl group from acetyl-CoA to tetrahydrodipicolinate. This Streptococcus uberis (strain ATCC BAA-854 / 0140J) protein is 2,3,4,5-tetrahydropyridine-2,6-dicarboxylate N-acetyltransferase.